The following is a 159-amino-acid chain: ATP synthase subunit b (159 aa).

The helical transmembrane segment at 2 to 22 (EFNLVTIGFTIVNFIILMLIL) threads the bilayer.

This sequence belongs to the ATPase B chain family. In terms of assembly, F-type ATPases have 2 components, F(1) - the catalytic core - and F(0) - the membrane proton channel. F(1) has five subunits: alpha(3), beta(3), gamma(1), delta(1), epsilon(1). F(0) has three main subunits: a(1), b(2) and c(10-14). The alpha and beta chains form an alternating ring which encloses part of the gamma chain. F(1) is attached to F(0) by a central stalk formed by the gamma and epsilon chains, while a peripheral stalk is formed by the delta and b chains.

The protein resides in the cell membrane. Functionally, f(1)F(0) ATP synthase produces ATP from ADP in the presence of a proton or sodium gradient. F-type ATPases consist of two structural domains, F(1) containing the extramembraneous catalytic core and F(0) containing the membrane proton channel, linked together by a central stalk and a peripheral stalk. During catalysis, ATP synthesis in the catalytic domain of F(1) is coupled via a rotary mechanism of the central stalk subunits to proton translocation. Its function is as follows. Component of the F(0) channel, it forms part of the peripheral stalk, linking F(1) to F(0). The chain is ATP synthase subunit b from Clostridium acetobutylicum (strain ATCC 824 / DSM 792 / JCM 1419 / IAM 19013 / LMG 5710 / NBRC 13948 / NRRL B-527 / VKM B-1787 / 2291 / W).